Here is a 335-residue protein sequence, read N- to C-terminus: Cathepsin B (335 aa).

The signal sequence occupies residues 1 to 17 (MWRLLATLSCLVLLTSA). Positions 18-79 (RESLHFQPLS…QRAAFAADMI (62 aa)) are cleaved as a propeptide — activation peptide. Intrachain disulfides connect Cys-93-Cys-122, Cys-105-Cys-150, Cys-141-Cys-207, Cys-142-Cys-146, Cys-179-Cys-211, and Cys-187-Cys-198. Cys-108 is an active-site residue. An N-linked (GlcNAc...) asparagine glycan is attached at Asn-192. N6-acetyllysine is present on Lys-220. A disulfide bridge connects residues Cys-227 and Cys-331. Residues His-278 and Asn-298 contribute to the active site. The propeptide occupies 333-335 (PHF).

This sequence belongs to the peptidase C1 family. In terms of assembly, dimer of a heavy chain and a light chain cross-linked by a disulfide bond. Interacts with SRPX2. Directly interacts with SHKBP1. Expressed in heart (at protein level).

It localises to the lysosome. The protein resides in the melanosome. It is found in the secreted. Its subcellular location is the extracellular space. The protein localises to the apical cell membrane. The catalysed reaction is Hydrolysis of proteins with broad specificity for peptide bonds. Preferentially cleaves -Arg-Arg-|-Xaa bonds in small molecule substrates (thus differing from cathepsin L). In addition to being an endopeptidase, shows peptidyl-dipeptidase activity, liberating C-terminal dipeptides.. In terms of biological role, thiol protease which is believed to participate in intracellular degradation and turnover of proteins. Cleaves matrix extracellular phosphoglycoprotein MEPE. Involved in the solubilization of cross-linked TG/thyroglobulin in the thyroid follicle lumen. Has also been implicated in tumor invasion and metastasis. The polypeptide is Cathepsin B (CTSB) (Sus scrofa (Pig)).